We begin with the raw amino-acid sequence, 539 residues long: Probable 1,4-beta-D-glucan cellobiohydrolase B (539 aa).

An N-terminal signal peptide occupies residues 1 to 26 (MLPSTISYRIYKNALFFAALFGAVQA). The tract at residues 27 to 461 (QKVGTSKAEV…SNIKVGPIGS (435 aa)) is catalytic. N-linked (GlcNAc...) asparagine glycosylation occurs at N90. The Nucleophile role is filled by E238. E243 serves as the catalytic Proton donor. N-linked (GlcNAc...) asparagine glycosylation is found at N296 and N495. Positions 462-503 (TFNSGGSNPGGSTTTTKPATSTTTTKATTTATTNTTGPTGTG) are thr-rich linker. Over residues 462 to 503 (TFNSGGSNPGGSTTTTKPATSTTTTKATTTATTNTTGPTGTG) the composition is skewed to low complexity. The interval 462–504 (TFNSGGSNPGGSTTTTKPATSTTTTKATTTATTNTTGPTGTGV) is disordered. The CBM1 domain maps to 503–539 (GVAQPWAQCGGIGYSGPTQCAAPYTCTKQNDYYSQCL). Cystine bridges form between C511–C528 and C522–C538.

Belongs to the glycosyl hydrolase 7 (cellulase C) family.

It localises to the secreted. The enzyme catalyses Hydrolysis of (1-&gt;4)-beta-D-glucosidic linkages in cellulose and cellotetraose, releasing cellobiose from the non-reducing ends of the chains.. In terms of biological role, the biological conversion of cellulose to glucose generally requires three types of hydrolytic enzymes: (1) Endoglucanases which cut internal beta-1,4-glucosidic bonds; (2) Exocellobiohydrolases that cut the disaccharide cellobiose from the non-reducing end of the cellulose polymer chain; (3) Beta-1,4-glucosidases which hydrolyze the cellobiose and other short cello-oligosaccharides to glucose. This Aspergillus clavatus (strain ATCC 1007 / CBS 513.65 / DSM 816 / NCTC 3887 / NRRL 1 / QM 1276 / 107) protein is Probable 1,4-beta-D-glucan cellobiohydrolase B (cbhB).